Consider the following 962-residue polypeptide: Voltage-gated delayed rectifier potassium channel KCNH1 (962 aa).

The Cytoplasmic segment spans residues 1 to 220; that stretch reads MTMAGGRRGL…LHYCVFKTTW (220 aa). In terms of domain architecture, PAS spans 14–94; it reads QNTFLENIVR…QTFENYEMNS (81 aa). The PAC domain occupies 93–145; the sequence is NSFEILMYKKNRTPVWFFVKIAPIRNEQDKVVLFLCTFSDITAFKQPIEDDSC. Residues 151-162 are required for phosphatidylinositol bisphosphate binding; sequence FARLTRALTSSR. The chain crosses the membrane as a helical span at residues 221–241; that stretch reads DWIILILTFYTAILVPYNVSF. Residues 242–248 lie on the Extracellular side of the membrane; the sequence is KTRQNNV. A helical membrane pass occupies residues 249–269; that stretch reads AWLVVDSIVDVIFLVDIVLNF. Residues 270 to 290 are Cytoplasmic-facing; that stretch reads HTTFVGPAGEVISDPKLIRMN. Residues 291–309 traverse the membrane as a helical segment; that stretch reads YLKTWFVIDLLSCLPYDVI. Topologically, residues 310–318 are extracellular; the sequence is NAFENVDEG. Residues 319–341 traverse the membrane as a helical; Voltage-sensor segment; the sequence is ISSLFSSLKVVRLLRLGRVARKL. The Cytoplasmic portion of the chain corresponds to 342 to 350; sequence DHYIEYGAA. A helical membrane pass occupies residues 351–372; that stretch reads VLVLLVCVFGLAAHWMACIWYS. The Extracellular portion of the chain corresponds to 373-421; it reads IGDYEIFDEDTKTIRNNSWLYQLALDIGTPYQFNGSGSGKWEGGPSKNS. 2 N-linked (GlcNAc...) asparagine glycosylation sites follow: N388 and N406. The pore-forming intramembrane region spans 422 to 443; it reads VYISSLYFTMTSLTSVGFGNIA. The Selectivity filter signature appears at 436 to 441; the sequence is SVGFGN. Over 444 to 450 the chain is Extracellular; sequence PSTDIEK. Residues 451–471 traverse the membrane as a helical segment; it reads IFAVAIMMIGSLLYATIFGNV. Over 472–962 the chain is Cytoplasmic; it reads TTIFQQMYAN…ESDRDIFGAS (491 aa). A calmodulin-binding region spans residues 646-743; it reads KRDALQKVLE…LDDLDVEKGN (98 aa). Residues 672-674 form an interaction with cyclic nucleotide-binding pocket region; sequence YNL. The span at 830 to 852 shows a compositional bias: basic and acidic residues; it reads ESMETLPERTKASGEATLKKTDS. 2 disordered regions span residues 830–859 and 933–962; these read ESME…GITK and SRGS…FGAS. A CAD (involved in subunit assembly) region spans residues 897-937; it reads ATVLEVKHELKEDIKALNAKMTSIEKQLSEILRILMSRGSS. Over residues 934 to 952 the composition is skewed to polar residues; that stretch reads RGSSQSPQDTCEVSRPQSP. A phosphoserine mark is found at S947, S951, and S954. Basic and acidic residues predominate over residues 953–962; that stretch reads ESDRDIFGAS.

It belongs to the potassium channel family. H (Eag) (TC 1.A.1.20) subfamily. Kv10.1/KCNH1 sub-subfamily. Homomultimer. The potassium channel is composed of a homo- or heterotetrameric complex of pore-forming alpha subunits that can associate with modulating beta subunits. Heteromultimer with KCNH5/EAG2. Interacts with ALG10B. Interacts with RABEP1. Interacts (via C-terminus) with CTTN. Interacts (via cytoplasmic region) with Ca(2+)-bound calmodulin. In terms of processing, channel activity is regulated via tyrosine phosphorylation/dephosphorylation by SRC and PTPN6. Detected in cerebellum, at parallel fiber synapses on Purkinje cell spines. Detected in hippocampus neurons (at protein level). Detected in brain, but not in the other tissues tested; expression is highest in granular cells of the dentate gyrus, in hippocampus CA3 pyramidal cells, and in cerebellar granule cells. Detected in pituitary.

The protein localises to the cell membrane. It localises to the nucleus inner membrane. Its subcellular location is the cell projection. It is found in the dendrite. The protein resides in the axon. The protein localises to the presynaptic cell membrane. It localises to the perikaryon. Its subcellular location is the postsynaptic density membrane. It is found in the early endosome membrane. The catalysed reaction is K(+)(in) = K(+)(out). With respect to regulation, channel activity is inhibited by interaction with Ca(2+)-bound calmodulin. Interaction of a single pore-forming alpha subunit with a calmodulin chain is sufficient to promote channel closure. Channel activity is not regulated by cyclic nucleotides. Channel activity is inhibited by binding intracellular phosphatidylinositol-3,5-bisphosphate and phosphatidylinositol-4,5-bisphosphate (PIP2), but is not inhibited by phosphatidylinositol 4-phosphate. In terms of biological role, pore-forming (alpha) subunit of a voltage-gated delayed rectifier potassium channel that mediates outward-rectifying potassium currents which, on depolarization, reaches a steady-state level and do not inactivate. The activation kinetics depend on the prepulse potential and external divalent cation concentration. With negative prepulses, the current activation is delayed and slowed down several fold, whereas more positive prepulses speed up activation. The time course of activation is biphasic with a fast and a slowly activating current component. Activates at more positive membrane potentials and exhibit a steeper activation curve. Channel properties are modulated by subunit assembly. Mediates IK(NI) current in myoblasts. Involved in the regulation of cell proliferation and differentiation, in particular adipogenic and osteogenic differentiation in bone marrow-derived mesenchymal stem cells (MSCs). The polypeptide is Voltage-gated delayed rectifier potassium channel KCNH1 (Rattus norvegicus (Rat)).